A 91-amino-acid polypeptide reads, in one-letter code: Probable translocation protein y4yM (91 aa).

The next 2 helical transmembrane spans lie at 15-35 (VVFM…GLTI) and 55-75 (LLVV…PLIE).

It belongs to the FliQ/MopD/SpaQ family.

It localises to the cell membrane. Could be involved in the secretion of an unknown factor. This chain is Probable translocation protein y4yM, found in Sinorhizobium fredii (strain NBRC 101917 / NGR234).